A 139-amino-acid chain; its full sequence is Peptide methionine sulfoxide reductase MsrB (139 aa).

The MsrB domain maps to Glu-8–Asp-130. Residues Cys-47, Cys-50, Cys-96, and Cys-99 each coordinate Zn(2+). Catalysis depends on Cys-119, which acts as the Nucleophile.

The protein belongs to the MsrB Met sulfoxide reductase family. The cofactor is Zn(2+).

The catalysed reaction is L-methionyl-[protein] + [thioredoxin]-disulfide + H2O = L-methionyl-(R)-S-oxide-[protein] + [thioredoxin]-dithiol. The polypeptide is Peptide methionine sulfoxide reductase MsrB (Acinetobacter baylyi (strain ATCC 33305 / BD413 / ADP1)).